We begin with the raw amino-acid sequence, 539 residues long: Chaperonin GroEL (539 aa).

ATP contacts are provided by residues 30 to 33 (TLGP), 87 to 91 (DGTTT), Gly414, 479 to 481 (DAL), and Asp495.

The protein belongs to the chaperonin (HSP60) family. In terms of assembly, forms a cylinder of 14 subunits composed of two heptameric rings stacked back-to-back. Interacts with the co-chaperonin GroES.

It is found in the cytoplasm. It carries out the reaction ATP + H2O + a folded polypeptide = ADP + phosphate + an unfolded polypeptide.. Functionally, together with its co-chaperonin GroES, plays an essential role in assisting protein folding. The GroEL-GroES system forms a nano-cage that allows encapsulation of the non-native substrate proteins and provides a physical environment optimized to promote and accelerate protein folding. The protein is Chaperonin GroEL of Caldicellulosiruptor saccharolyticus (strain ATCC 43494 / DSM 8903 / Tp8T 6331).